Here is a 745-residue protein sequence, read N- to C-terminus: AMP deaminase 1 (745 aa).

Phosphothreonine is present on Thr-79. A Phosphoserine modification is found at Ser-83. Tyr-214 is modified (phosphotyrosine). Residues His-301 and His-303 each contribute to the Zn(2+) site. Substrate-binding positions include His-303 and 372–377 (KFNDKY). Ser-439 bears the Phosphoserine mark. Residue His-570 coordinates Zn(2+). Glu-573 is a substrate binding site. His-592 (proton acceptor) is an active-site residue. Residue Asp-647 coordinates Zn(2+). Residue 648–651 (DPMQ) participates in substrate binding.

It belongs to the metallo-dependent hydrolases superfamily. Adenosine and AMP deaminases family. As to quaternary structure, homotetramer. The cofactor is Zn(2+).

It carries out the reaction AMP + H2O + H(+) = IMP + NH4(+). It functions in the pathway purine metabolism; IMP biosynthesis via salvage pathway; IMP from AMP: step 1/1. AMP deaminase plays a critical role in energy metabolism. This chain is AMP deaminase 1, found in Mus musculus (Mouse).